We begin with the raw amino-acid sequence, 149 residues long: Protein SprT-like (149 aa).

A SprT-like domain is found at threonine 4–leucine 143. Residue histidine 64 participates in Zn(2+) binding. The active site involves glutamate 65. Histidine 68 lines the Zn(2+) pocket.

Belongs to the SprT family. Zn(2+) serves as cofactor.

Its subcellular location is the cytoplasm. The chain is Protein SprT-like from Streptococcus pneumoniae (strain JJA).